A 481-amino-acid polypeptide reads, in one-letter code: Regulator of G-protein signaling 1 (481 aa).

Residues 1 to 31 form a disordered region; it reads MPALHNPSSPPPSYEAVTSYRNGNSIDSGDK. The interval 33–227 is fungal-DR; it reads QQCSRLMKIT…SVHEIGKSKN (195 aa). In terms of domain architecture, DEP spans 232–312; that stretch reads PVYSVSSPSP…KGVSYFLTGK (81 aa). The region spanning 344–474 is the RGS domain; that stretch reads ILETILRKPN…AGDSLLKFLE (131 aa).

The protein resides in the nucleus. It localises to the cytoplasm. Negatively regulates pheromone signaling during mating. Acts in a negative feedback loop that is essential for the mating process. This loop acts to down-regulate cellular sensitivity to pheromone. Activated by ste11. The polypeptide is Regulator of G-protein signaling 1 (rgs1) (Schizosaccharomyces pombe (strain 972 / ATCC 24843) (Fission yeast)).